Consider the following 194-residue polypeptide: Transposon Tn2501 resolvase (194 aa).

A Resolvase/invertase-type recombinase catalytic domain is found at 3–143; it reads RVFAYCRVST…SGIARAKATG (141 aa). Catalysis depends on Ser-11, which acts as the O-(5'-phospho-DNA)-serine intermediate. Positions 170 to 189 form a DNA-binding region, H-T-H motif; that stretch reads ISAIAREFNTTRQTILRVKA.

Belongs to the site-specific recombinase resolvase family.

In terms of biological role, resolvase catalyzes the resolution (a site-specific recombination) of the cointegrated replicon to yield the final transposition products. This is Transposon Tn2501 resolvase (tnpR) from Escherichia coli.